The sequence spans 79 residues: Small ribosomal subunit protein uS17 (79 aa).

It belongs to the universal ribosomal protein uS17 family. As to quaternary structure, part of the 30S ribosomal subunit.

In terms of biological role, one of the primary rRNA binding proteins, it binds specifically to the 5'-end of 16S ribosomal RNA. The chain is Small ribosomal subunit protein uS17 from Rhizobium johnstonii (strain DSM 114642 / LMG 32736 / 3841) (Rhizobium leguminosarum bv. viciae).